We begin with the raw amino-acid sequence, 449 residues long: Sulfite exporter TauE/SafE family protein 5 (449 aa).

Transmembrane regions (helical) follow at residues 1-21, 57-77, 78-98, 101-121, 127-147, 150-170, 224-244, 259-279, 315-335, 353-373, 378-398, and 409-429; these read MKTL…NANQ, AIIM…AGGI, GGGG…LKTA, FSAF…LFGG, YDLA…GVIC, VLPE…SSLK, IPWT…VIYL, PCGV…LIFT, AMSF…GMLI, TSFM…LLGM, TAYV…VLVQ, and IIVF…TSFG.

It belongs to the 4-toluene sulfonate uptake permease (TSUP) (TC 2.A.102) family.

It is found in the membrane. In Arabidopsis thaliana (Mouse-ear cress), this protein is Sulfite exporter TauE/SafE family protein 5.